Reading from the N-terminus, the 395-residue chain is [LysW]-aminoadipate semialdehyde transaminase (395 aa).

Residues 113–114 (GT) and Phe-140 each bind pyridoxal 5'-phosphate. Arg-143 is a binding site for substrate. Residue 225–228 (DEIQ) participates in pyridoxal 5'-phosphate binding. An N6-(pyridoxal phosphate)lysine modification is found at Lys-254. Position 282 (Thr-282) interacts with substrate. Thr-283 is a binding site for pyridoxal 5'-phosphate.

This sequence belongs to the class-III pyridoxal-phosphate-dependent aminotransferase family. LysJ subfamily. As to quaternary structure, homodimer. It depends on pyridoxal 5'-phosphate as a cofactor.

Its subcellular location is the cytoplasm. The enzyme catalyses [amino-group carrier protein]-C-terminal-gamma-(L-lysyl)-L-glutamate + 2-oxoglutarate = [amino-group carrier protein]-C-terminal-N-(1-carboxy-5-oxopentan-1-yl)-L-glutamine + L-glutamate. The protein operates within amino-acid biosynthesis; L-lysine biosynthesis via AAA pathway; L-lysine from L-alpha-aminoadipate (Thermus route): step 4/5. Functionally, catalyzes the transfer of the amino group of L-glutamate to [LysW]-aminoadipate 6-semialdehyde, generating [LysW]-gamma-L-lysine. In Thermus thermophilus (strain ATCC 27634 / DSM 579 / HB8), this protein is [LysW]-aminoadipate semialdehyde transaminase.